We begin with the raw amino-acid sequence, 570 residues long: Trans-cinnamate:CoA ligase, peroxisomal (570 aa).

Residues alanine 568 to leucine 570 carry the Microbody targeting signal motif.

Belongs to the ATP-dependent AMP-binding enzyme family. As to quaternary structure, monomer. It depends on K(+) as a cofactor. In terms of tissue distribution, mostly expressed in flower organs, with highest levels in corollas and petal limbs, and, to a lesser extent, in petal tubes, sepals, pistils, stamen, stigma, anthers and ovaries. Also present at low levels in leaves, stems and roots.

Its subcellular location is the peroxisome. It carries out the reaction (E)-4-coumarate + ATP + CoA = (E)-4-coumaroyl-CoA + AMP + diphosphate. It catalyses the reaction (E)-caffeate + ATP + CoA = (E)-caffeoyl-CoA + AMP + diphosphate. The enzyme catalyses (E)-cinnamate + ATP + CoA = (E)-cinnamoyl-CoA + AMP + diphosphate. The protein operates within phenylpropanoid metabolism; trans-cinnamate biosynthesis. It participates in phytoalexin biosynthesis; 3,4',5-trihydroxystilbene biosynthesis; 3,4',5-trihydroxystilbene from trans-4-coumarate: step 1/2. Functionally, involved in the biosynthesis of floral volatile benzenoid/phenylpropanoid (FVBP) scent (e.g. benzylbenzoate, phenylethylbenzoate, and methylbenzoate). Catalyzes the formation of CoA esters of cinnamic acid, and, with lower efficiency, of 4-coumaric acid and caffeic acid. This Petunia hybrida (Petunia) protein is Trans-cinnamate:CoA ligase, peroxisomal.